The chain runs to 680 residues: DNA ligase (680 aa).

NAD(+) contacts are provided by residues 35–39, 86–87, and glutamate 111; these read DADFD and SL. Catalysis depends on lysine 113, which acts as the N6-AMP-lysine intermediate. Residues arginine 134, glutamate 174, lysine 290, and lysine 314 each coordinate NAD(+). Zn(2+)-binding residues include cysteine 408, cysteine 411, cysteine 427, and cysteine 433. Residues 597-680 form the BRCT domain; the sequence is VAEQTLEGLT…RLLNTGSADE (84 aa).

It belongs to the NAD-dependent DNA ligase family. LigA subfamily. The cofactor is Mg(2+). Mn(2+) is required as a cofactor.

It carries out the reaction NAD(+) + (deoxyribonucleotide)n-3'-hydroxyl + 5'-phospho-(deoxyribonucleotide)m = (deoxyribonucleotide)n+m + AMP + beta-nicotinamide D-nucleotide.. Functionally, DNA ligase that catalyzes the formation of phosphodiester linkages between 5'-phosphoryl and 3'-hydroxyl groups in double-stranded DNA using NAD as a coenzyme and as the energy source for the reaction. It is essential for DNA replication and repair of damaged DNA. This is DNA ligase from Corynebacterium glutamicum (strain R).